The following is a 468-amino-acid chain: MREYDIVVIGSGPGGQKAAIASAKLGKSVAIVERGRMLGGVCVNTGTIPSKTLREAVLYLTGMNQRELYGASYRVKDRITPADLLARTQHVIGKEVDVVRNQLMRNRVDLIVGHGRFIDPHTILVEDQARREKTTVTGDYIIIATGTRPARPSGVEFDEERVLDSDGILDLKSLPSSMVVVGAGVIGIEYASMFAALGTKVTVVEKRDNMLDFCDPEVVEALKFHLRDLAVTFRFGEEVTAVDVGSAGTVTTLASGKQIPAETVMYSAGRQGQTDHLDLHNAGLEVQGRGRIFVDDRFQTKVDHIYAVGDVIGFPALAATSMEQGRLAAYHAFGEPTDGITELQPIGIYSIPEVSYVGATEVELTKSSIPYEVGVARYRELARGQIAGDSYGMLKLLVSTEDLKLLGVHIFGTSATEMVHIGQAVMGCGGSVEYLVDAVFNYPTFSEAYKNAALDVMNKMRALNQFRR.

33–42 (ERGRMLGGVC) is a binding site for FAD.

Belongs to the class-I pyridine nucleotide-disulfide oxidoreductase family. FAD is required as a cofactor.

It localises to the cytoplasm. The enzyme catalyses NAD(+) + NADPH = NADH + NADP(+). Its function is as follows. Conversion of NADPH, generated by peripheral catabolic pathways, to NADH, which can enter the respiratory chain for energy generation. In Mycobacterium bovis (strain ATCC BAA-935 / AF2122/97), this protein is Probable soluble pyridine nucleotide transhydrogenase (sthA).